The primary structure comprises 675 residues: Dihydrolipoyllysine-residue acetyltransferase component of pyruvate dehydrogenase complex (675 aa).

Residues alanine 2–glycine 77 form the Lipoyl-binding 1 domain. N6-lipoyllysine is present on lysine 43. The tract at residues glycine 77 to valine 124 is disordered. 2 stretches are compositionally biased toward low complexity: residues alanine 84–proline 95 and proline 112–valine 124. A Lipoyl-binding 2 domain is found at alanine 121–glycine 196. Lysine 162 carries the post-translational modification N6-lipoyllysine. The disordered stretch occupies residues alanine 200 to valine 240. Residues alanine 205–valine 218 are compositionally biased toward acidic residues. Residues alanine 237 to glycine 312 form the Lipoyl-binding 3 domain. At lysine 278 the chain carries N6-lipoyllysine. The disordered stretch occupies residues alanine 316–aspartate 368. The span at alanine 321–valine 334 shows a compositional bias: acidic residues. The segment covering lysine 335–alanine 352 has biased composition (basic and acidic residues). Low complexity predominate over residues alanine 353–serine 366. The region spanning tyrosine 372–alanine 409 is the Peripheral subunit-binding (PSBD) domain. Residues histidine 645 and aspartate 649 contribute to the active site.

The protein belongs to the 2-oxoacid dehydrogenase family. As to quaternary structure, forms a 24-polypeptide structural core with octahedral symmetry. Part of an unusual ODH/PDH supercomplex, consisting of AceE (E1), AceF (E2), and Lpd (E3) together with OdhA (E1+E2). It depends on (R)-lipoate as a cofactor.

It carries out the reaction N(6)-[(R)-dihydrolipoyl]-L-lysyl-[protein] + acetyl-CoA = N(6)-[(R)-S(8)-acetyldihydrolipoyl]-L-lysyl-[protein] + CoA. Functionally, is essential for both 2-oxoglutarate dehydrogenase (ODH) and pyruvate dehydrogenase (PDH) activities, but AceF has exclusively transacetylase (and no transsuccinylase) activity. The lipoyl residues required for ODH activity are likely provided by AceF. In Corynebacterium glutamicum (strain ATCC 13032 / DSM 20300 / JCM 1318 / BCRC 11384 / CCUG 27702 / LMG 3730 / NBRC 12168 / NCIMB 10025 / NRRL B-2784 / 534), this protein is Dihydrolipoyllysine-residue acetyltransferase component of pyruvate dehydrogenase complex (aceF).